A 634-amino-acid polypeptide reads, in one-letter code: BTB/POZ domain-containing protein At1g03010 (634 aa).

A BTB domain is found at 38 to 103; it reads SDLTVQVGSS…CYGINIEINL (66 aa). An NPH3 domain is found at 205 to 503; the sequence is DWWGKSLAVL…VQVLYFEQIR (299 aa). Tyr444 bears the Phosphotyrosine mark. A coiled-coil region spans residues 542 to 580; it reads RDNYASVRRENRELKLEVARMRMRLTDLEKDHISIKQEL.

This sequence belongs to the NPH3 family.

The protein operates within protein modification; protein ubiquitination. May act as a substrate-specific adapter of an E3 ubiquitin-protein ligase complex (CUL3-RBX1-BTB) which mediates the ubiquitination and subsequent proteasomal degradation of target proteins. In Arabidopsis thaliana (Mouse-ear cress), this protein is BTB/POZ domain-containing protein At1g03010.